Here is a 344-residue protein sequence, read N- to C-terminus: DNA-directed RNA polymerase subunit alpha (344 aa).

An alpha N-terminal domain (alpha-NTD) region spans residues 1 to 246; the sequence is MPMERFLKDF…EFLFPLVDFE (246 aa). The tract at residues 259 to 344 is alpha C-terminal domain (alpha-CTD); sequence ESSNLLDMSI…VLSKNVKISE (86 aa).

Belongs to the RNA polymerase alpha chain family. In terms of assembly, homodimer. The RNAP catalytic core consists of 2 alpha, 1 beta, 1 beta' and 1 omega subunit. When a sigma factor is associated with the core the holoenzyme is formed, which can initiate transcription.

The enzyme catalyses RNA(n) + a ribonucleoside 5'-triphosphate = RNA(n+1) + diphosphate. Its function is as follows. DNA-dependent RNA polymerase catalyzes the transcription of DNA into RNA using the four ribonucleoside triphosphates as substrates. The chain is DNA-directed RNA polymerase subunit alpha from Borreliella afzelii (strain PKo) (Borrelia afzelii).